A 447-amino-acid polypeptide reads, in one-letter code: MSQRKYFGTDGVRGEVGGPVINAAFALRLGYAAGRVLVRRNASRQGGRPQVLIGKDTRISGYMLESALEAGLSAAGIDVVLAGPIPTPGVAYLTRALRLVAGIVISASHNPYQDNGIKFFSAEGTKLPDEVEAEIEAALEQELGCVKSEDLGRARRMSDSQGRYIEFCKSTVPHSLDLHGMKLVVDAANGAAYHIAPHVFRELGAEVYAIGVSPDGFNINKGVGALHPESLAEEVKARGAHYGIALDGDADRLQMVDASGRIYNGDELLYAIVRDRMRQGKVEGVVGTLMTNYGFELAMGRLGVAFERANVGDRYVLEQLLARGWQFGGESSGHLLCLDCHTTGDGTIAALQVLAALHANKASLSDWIADLRLYPQVMINVPLQPGQDWKTHAGLAAARAGVEAELAGRGRVLIRASGTEPKLRLMVEAEDFALAQASAQKLADSLG.

Serine 108 (phosphoserine intermediate) is an active-site residue. Mg(2+) is bound by residues serine 108, aspartate 247, aspartate 249, and aspartate 251. Serine 108 is subject to Phosphoserine.

The protein belongs to the phosphohexose mutase family. Requires Mg(2+) as cofactor. Activated by phosphorylation.

It carries out the reaction alpha-D-glucosamine 1-phosphate = D-glucosamine 6-phosphate. Catalyzes the conversion of glucosamine-6-phosphate to glucosamine-1-phosphate. The chain is Phosphoglucosamine mutase from Bordetella avium (strain 197N).